The chain runs to 854 residues: Lysine-specific demethylase 3 (854 aa).

The disordered stretch occupies residues 64–88; that stretch reads QRVQQEEESLGQVPPLTEEEQQRHD. One can recognise a JmjC domain in the interval 601–806; it reads LRTGNLNIAS…HCYHLTHEFR (206 aa). Fe cation is bound by residues histidine 643, aspartate 645, and histidine 774.

Belongs to the JHDM2-like histone demethylase family. Fe(2+) is required as a cofactor. Expressed in neurons close to the dorsal lateral neurons involved in circadian rhythm.

It localises to the nucleus. The protein localises to the cytoplasm. The enzyme catalyses N(6),N(6)-dimethyl-L-lysyl(9)-[histone H3] + 2 2-oxoglutarate + 2 O2 = L-lysyl(9)-[histone H3] + 2 formaldehyde + 2 succinate + 2 CO2. Its function is as follows. Histone demethylase that specifically demethylates 'Lys-10' of histone H3 (H3K9), thereby playing a central role in histone code. Demethylation of Lys residue generates formaldehyde and succinate. Probably involved in regulation of chromatin structure, promoting expansion of euchromatin. Negatively regulates rhino-dependent piRNA production capacity of several genomic regions; may help define the frontiers of piRNA clusters by regulating histone methylation levels. May be involved in regulation of behavior and circadian rhythms. The polypeptide is Lysine-specific demethylase 3 (Drosophila melanogaster (Fruit fly)).